The primary structure comprises 254 residues: Thiazole synthase (254 aa).

Lys96 (schiff-base intermediate with DXP) is an active-site residue. Residues Gly157, 183–184 (AG), and 205–206 (NT) each bind 1-deoxy-D-xylulose 5-phosphate.

This sequence belongs to the ThiG family. In terms of assembly, homotetramer. Forms heterodimers with either ThiH or ThiS.

It localises to the cytoplasm. The catalysed reaction is [ThiS sulfur-carrier protein]-C-terminal-Gly-aminoethanethioate + 2-iminoacetate + 1-deoxy-D-xylulose 5-phosphate = [ThiS sulfur-carrier protein]-C-terminal Gly-Gly + 2-[(2R,5Z)-2-carboxy-4-methylthiazol-5(2H)-ylidene]ethyl phosphate + 2 H2O + H(+). Its pathway is cofactor biosynthesis; thiamine diphosphate biosynthesis. Its function is as follows. Catalyzes the rearrangement of 1-deoxy-D-xylulose 5-phosphate (DXP) to produce the thiazole phosphate moiety of thiamine. Sulfur is provided by the thiocarboxylate moiety of the carrier protein ThiS. In vitro, sulfur can be provided by H(2)S. This chain is Thiazole synthase, found in Clostridium perfringens (strain 13 / Type A).